Consider the following 156-residue polypeptide: Large ribosomal subunit protein uL22 (156 aa).

The protein belongs to the universal ribosomal protein uL22 family. Part of the 50S ribosomal subunit.

In terms of biological role, this protein binds specifically to 23S rRNA. It makes multiple contacts with different domains of the 23S rRNA in the assembled 50S subunit and ribosome. Its function is as follows. The globular domain of the protein is located near the polypeptide exit tunnel on the outside of the subunit, while an extended beta-hairpin is found that lines the wall of the exit tunnel in the center of the 70S ribosome. This Aeropyrum pernix (strain ATCC 700893 / DSM 11879 / JCM 9820 / NBRC 100138 / K1) protein is Large ribosomal subunit protein uL22.